The sequence spans 430 residues: Sorting nexin-30 (430 aa).

Polar residues predominate over residues 1–18 (MSNGGTPRSLPSSGQKSI). The disordered stretch occupies residues 1 to 66 (MSNGGTPRSL…SSPASSSSLL (66 aa)). The span at 57-66 (SSPASSSSLL) shows a compositional bias: low complexity. In terms of domain architecture, PX spans 80-201 (RDLFVTVDDP…AFLSAKDLNK (122 aa)). Positions 123, 125, 153, and 167 each coordinate a 1,2-diacyl-sn-glycero-3-phospho-(1D-myo-inositol-3-phosphate). Residues 223 to 428 (KLRGRPVEFA…LQDKQDAKGE (206 aa)) enclose the BAR domain.

It belongs to the sorting nexin family.

The protein localises to the early endosome membrane. Functionally, involved in the regulation of endocytosis and in several stages of intracellular trafficking. Together with snx4, involved in autophagosome assembly. This chain is Sorting nexin-30 (snx30), found in Danio rerio (Zebrafish).